Here is a 323-residue protein sequence, read N- to C-terminus: Ferrochelatase (323 aa).

Fe cation-binding residues include histidine 196 and glutamate 277.

It belongs to the ferrochelatase family.

It localises to the cytoplasm. The enzyme catalyses heme b + 2 H(+) = protoporphyrin IX + Fe(2+). The protein operates within porphyrin-containing compound metabolism; protoheme biosynthesis; protoheme from protoporphyrin-IX: step 1/1. Catalyzes the ferrous insertion into protoporphyrin IX. This chain is Ferrochelatase, found in Haemophilus influenzae (strain ATCC 51907 / DSM 11121 / KW20 / Rd).